Reading from the N-terminus, the 140-residue chain is uncharacterized protein (140 aa).

This is an uncharacterized protein from Acanthamoeba polyphaga mimivirus (APMV).